Here is a 153-residue protein sequence, read N- to C-terminus: Ribosome maturation factor RimP (153 aa).

This sequence belongs to the RimP family.

Its subcellular location is the cytoplasm. Required for maturation of 30S ribosomal subunits. This Coxiella burnetii (strain Dugway 5J108-111) protein is Ribosome maturation factor RimP.